Reading from the N-terminus, the 190-residue chain is Inosine triphosphate pyrophosphatase (190 aa).

Residue 8–13 (TGNANK) coordinates ITP. Glu37 lines the Mg(2+) pocket. Residues Lys49, 65 to 66 (DT), Lys82, 140 to 143 (FGWD), Lys163, and 168 to 169 (HR) contribute to the ITP site.

The protein belongs to the HAM1 NTPase family. In terms of assembly, homodimer. The cofactor is Mg(2+). It depends on Mn(2+) as a cofactor.

It is found in the cytoplasm. It localises to the nucleus. The catalysed reaction is ITP + H2O = IMP + diphosphate + H(+). The enzyme catalyses dITP + H2O = dIMP + diphosphate + H(+). It carries out the reaction XTP + H2O = XMP + diphosphate + H(+). Its function is as follows. Pyrophosphatase that hydrolyzes non-canonical purine nucleotides such as inosine triphosphate (ITP), deoxyinosine triphosphate (dITP) or xanthosine 5'-triphosphate (XTP) to their respective monophosphate derivatives. The enzyme does not distinguish between the deoxy- and ribose forms. Probably excludes non-canonical purines from RNA and DNA precursor pools, thus preventing their incorporation into RNA and DNA and avoiding chromosomal lesions. This is Inosine triphosphate pyrophosphatase from Batrachochytrium dendrobatidis (strain JAM81 / FGSC 10211) (Frog chytrid fungus).